Here is a 1162-residue protein sequence, read N- to C-terminus: ATP-dependent helicase/deoxyribonuclease subunit B (1162 aa).

Residues 1–275 enclose the UvrD-like helicase ATP-binding domain; it reads MELNAYIGRA…QFFKQQYRFN (275 aa). 8–15 contacts ATP; it reads GRAGTGKS. The UvrD-like helicase C-terminal domain occupies 269 to 583; sequence KQQYRFNNKD…SIGTMDLAKV (315 aa). C784, C1117, C1120, and C1126 together coordinate [4Fe-4S] cluster.

It belongs to the helicase family. AddB/RexB type 1 subfamily. In terms of assembly, heterodimer of AddA and AddB. It depends on Mg(2+) as a cofactor. Requires [4Fe-4S] cluster as cofactor.

Its function is as follows. The heterodimer acts as both an ATP-dependent DNA helicase and an ATP-dependent, dual-direction single-stranded exonuclease. Recognizes the chi site generating a DNA molecule suitable for the initiation of homologous recombination. The AddB subunit has 5' -&gt; 3' nuclease activity but not helicase activity. This Staphylococcus haemolyticus (strain JCSC1435) protein is ATP-dependent helicase/deoxyribonuclease subunit B.